Consider the following 558-residue polypeptide: CTP synthase (558 aa).

The tract at residues 1–266 (MSAKYIFVTG…DRLVMKYLRL (266 aa)) is amidoligase domain. CTP is bound at residue Ser14. Ser14 provides a ligand contact to UTP. ATP is bound by residues 15–20 (SLGKGL) and Asp72. Positions 72 and 140 each coordinate Mg(2+). CTP contacts are provided by residues 147–149 (DIE), 187–192 (KTKPTQ), and Lys223. UTP-binding positions include 187–192 (KTKPTQ) and Lys223. Residue 239–241 (KDV) coordinates ATP. A Glutamine amidotransferase type-1 domain is found at 291-537 (IIGIIGKYVE…IGASYEHRMK (247 aa)). Position 355 (Gly355) interacts with L-glutamine. The active-site Nucleophile; for glutamine hydrolysis is the Cys382. L-glutamine contacts are provided by residues 383–386 (LGMQ), Glu406, and Arg463. Active-site residues include His510 and Glu512. A disordered region spans residues 539–558 (THTKEREEESVFLRPERVGK). Over residues 542 to 558 (KEREEESVFLRPERVGK) the composition is skewed to basic and acidic residues.

The protein belongs to the CTP synthase family. Homotetramer.

The catalysed reaction is UTP + L-glutamine + ATP + H2O = CTP + L-glutamate + ADP + phosphate + 2 H(+). It carries out the reaction L-glutamine + H2O = L-glutamate + NH4(+). The enzyme catalyses UTP + NH4(+) + ATP = CTP + ADP + phosphate + 2 H(+). The protein operates within pyrimidine metabolism; CTP biosynthesis via de novo pathway; CTP from UDP: step 2/2. Its activity is regulated as follows. Allosterically activated by GTP, when glutamine is the substrate; GTP has no effect on the reaction when ammonia is the substrate. The allosteric effector GTP functions by stabilizing the protein conformation that binds the tetrahedral intermediate(s) formed during glutamine hydrolysis. Inhibited by the product CTP, via allosteric rather than competitive inhibition. Functionally, catalyzes the ATP-dependent amination of UTP to CTP with either L-glutamine or ammonia as the source of nitrogen. Regulates intracellular CTP levels through interactions with the four ribonucleotide triphosphates. The protein is CTP synthase of Koribacter versatilis (strain Ellin345).